Here is a 396-residue protein sequence, read N- to C-terminus: Histidine-rich glycoprotein (396 aa).

Cystatin domains follow at residues 1–102 (AVNP…SALT) and 103–169 (NMRA…RFSA). 6 disulfides stabilise this stretch: Cys7/Cys375, Cys56/Cys67, Cys77/Cys92, Cys123/Cys297, Cys137/Cys160, and Cys212/Cys242. Residue Asn70 is glycosylated (N-linked (GlcNAc...) asparagine; partial). 2 N-linked (GlcNAc...) asparagine glycosylation sites follow: Asn91 and Asn122. The tract at residues 176 to 322 (RPFHSGEHEH…GPGKGHFRFH (147 aa)) is disordered. The segment covering 197–208 (GSKDHGHPHESY) has biased composition (basic and acidic residues). Asn220 carries N-linked (GlcNAc...) asparagine glycosylation. Over residues 233-246 (LPFPPPGLRCPHPP) the composition is skewed to pro residues. Over residues 255 to 265 (PPHDHSSDEHH) the composition is skewed to basic and acidic residues. Positions 266–284 (PHGHHPHGHHPHGHHPHGH) are enriched in basic residues. Positions 285–296 (HPPDNDFYDHGP) are enriched in basic and acidic residues. Residues 304 to 322 (PPPRHSKERGPGKGHFRFH) are compositionally biased toward basic residues. A Phosphoserine modification is found at Ser309.

In terms of assembly, interacts (via the HRR domain) with TPM1; the interaction appears to contribute to the antiangiogenic properties of the HRR domain. Interacts with THBS1 (via the TSP type I repeats); the interaction blocks the antiangiogenic effect of THBS1 with CD36. Interacts with PLG (via its Kringle domains); the interaction tethers PLG to the cell surface and enhances its activation. Interacts with THBS2; the interaction blocks the antiangiogenic effect of THBS2 with CD36. Interacts with HPSE; the interaction is enhanced at acidic pH, partially inhibits binding of HPSE to cell surface receptors and modulates its enzymatic activity. Interacts (via the HRR domain) with TMP1; the interaction partially mediates the antiangiogenic properties of HRG. Interacts with kappa and lambda light chains of IgG molecules. Interacts with ATP5F1A; the interaction occurs on the surface of T-cells and alters their cell morphology in concert with CONA. Binds IgG molecules containing kappa and lambda light chains and inhibits the formation of insoluble immunoglobulin complexes. Interacts with F12; the interaction, which is enhanced in the presence of zinc ions and inhibited by heparin-binding to HRG, inhibits factor XII autoactivation and contact-initiated coagulation. In terms of processing, N-glycosylated. Post-translationally, proteolytic cleavage produces several HRG fragments which are mostly disulfide-linked and, therefore, not released. On platelet activation, may release a 33 kDa antiangiogenic peptide which encompasses the HRR.

The protein resides in the secreted. Plasma glycoprotein that binds a number of ligands such as heme, heparin, heparan sulfate, thrombospondin, plasminogen, and divalent metal ions. Inhibits rosette formation. Acts as an adapter protein and implicated in regulating many processes such as immune complex and pathogen clearance, cell adhesion, angiogenesis, coagulation and fibrinolysis. Mediates clearance of necrotic cells through enhancing the phagocytosis of necrotic cells in a heparan sulfate-dependent pathway. This process can be regulated by the presence of certain HRG ligands such as heparin and zinc ions. Binds to IgG subclasses of immunoglobins containing kappa and lambda light chains with different affinities regulating their clearance and inhibiting the formation of insoluble immune complexes. Tethers plasminogen to the cell surface. Binds T-cells and alters the cell morphology. Modulates angiogenesis by blocking the CD6-mediated antiangiongenic effect of thrombospondins, THBS1 and THBS2. This Bos taurus (Bovine) protein is Histidine-rich glycoprotein (HRG).